The sequence spans 372 residues: Prostaglandin E synthase 2 (372 aa).

At 1 to 54 the chain is on the lumenal side; sequence MAHAVRALWPHGRALAWRLGDRPALGLHAQSRAGFTGAAGGSGPAATARKGGPR. The helical transmembrane segment at 55–71 threads the bilayer; sequence LLGAAALALGGALGLYH. Residues 72–372 lie on the Cytoplasmic side of the membrane; sequence TARWHLRAQD…VEKAIAEAPQ (301 aa). Positions 87-190 constitute a Glutaredoxin domain; sequence SATQLSLSSR…DIITYYPPMK (104 aa). Position 92 is a phosphoserine (Ser92). Glutathione is bound by residues Val145 and 161-162; that span reads DS. The region spanning 259–372 is the GST C-terminal domain; that stretch reads DYIVKEGNFG…VEKAIAEAPQ (114 aa).

Belongs to the GST superfamily. In terms of assembly, may interact with CEBPB. Interacts with EXOSC10. Homodimer. Synthesized as a Golgi membrane-associated protein, and the proteolytic removal of the N-terminal hydrophobic domain leads to the formation of a mature cytosolic enzyme. As to expression, detected in heart (at protein level). Widely expressed. Expressed in heart &gt; kidney &gt; muscle &gt; testis &gt; endometrium = ovary &gt; myometrium = spleen = lung. In endometrium, it is mainly expressed in luminal epithelial cells followed by glandular epithelial cells, but expression is also present in stromal cells at a lower level.

It localises to the microsome membrane. It is found in the cytoplasm. The enzyme catalyses prostaglandin H2 = prostaglandin E2. It carries out the reaction prostaglandin H2 = (12S)-hydroxy-(5Z,8E,10E)-heptadecatrienoate + malonaldehyde. The protein operates within lipid metabolism; prostaglandin biosynthesis. Its activity is regulated as follows. Isomerase activity is increased by sulfhydril compounds. Dithiothreitol (DTT) is most effective, followed by glutathione (GSH) and 2-mercaptoethanol. Functionally, isomerase that catalyzes the conversion of PGH2 into the more stable prostaglandin E2 (PGE2) (in vitro). The biological function and the GSH-dependent property of PTGES2 is still under debate. In vivo, PTGES2 could form a complex with GSH and heme and would not participate in PGE2 synthesis but would catalyze the degradation of prostaglandin E2 H2 (PGH2) to 12(S)-hydroxy-5(Z),8(E),10(E)-heptadecatrienoic acid (HHT) and malondialdehyde (MDA). In Bos taurus (Bovine), this protein is Prostaglandin E synthase 2 (PTGES2).